A 301-amino-acid chain; its full sequence is Acetyl-coenzyme A carboxylase carboxyl transferase subunit beta (301 aa).

The region spanning 25-294 (LWIKDPSTGE…NSDAPAPQKP (270 aa)) is the CoA carboxyltransferase N-terminal domain.

The protein belongs to the AccD/PCCB family. In terms of assembly, acetyl-CoA carboxylase is a heterohexamer composed of biotin carboxyl carrier protein (AccB), biotin carboxylase (AccC) and two subunits each of ACCase subunit alpha (AccA) and ACCase subunit beta (AccD).

The protein resides in the cytoplasm. It carries out the reaction N(6)-carboxybiotinyl-L-lysyl-[protein] + acetyl-CoA = N(6)-biotinyl-L-lysyl-[protein] + malonyl-CoA. It functions in the pathway lipid metabolism; malonyl-CoA biosynthesis; malonyl-CoA from acetyl-CoA: step 1/1. Component of the acetyl coenzyme A carboxylase (ACC) complex. Biotin carboxylase (BC) catalyzes the carboxylation of biotin on its carrier protein (BCCP) and then the CO(2) group is transferred by the transcarboxylase to acetyl-CoA to form malonyl-CoA. This is Acetyl-coenzyme A carboxylase carboxyl transferase subunit beta from Brucella canis (strain ATCC 23365 / NCTC 10854 / RM-666).